The chain runs to 98 residues: NADH-ubiquinone oxidoreductase chain 4L (98 aa).

The next 3 helical transmembrane spans lie at Met1–Met21, Ala29–Leu49, and Met59–Val79.

Belongs to the complex I subunit 4L family. Core subunit of respiratory chain NADH dehydrogenase (Complex I) which is composed of 45 different subunits.

Its subcellular location is the mitochondrion inner membrane. It carries out the reaction a ubiquinone + NADH + 5 H(+)(in) = a ubiquinol + NAD(+) + 4 H(+)(out). Core subunit of the mitochondrial membrane respiratory chain NADH dehydrogenase (Complex I) which catalyzes electron transfer from NADH through the respiratory chain, using ubiquinone as an electron acceptor. Part of the enzyme membrane arm which is embedded in the lipid bilayer and involved in proton translocation. In Inia geoffrensis (Amazon river dolphin), this protein is NADH-ubiquinone oxidoreductase chain 4L (MT-ND4L).